Here is an 89-residue protein sequence, read N- to C-terminus: Serine-rich and transmembrane domain-containing 2 (89 aa).

The N-linked (GlcNAc...) asparagine glycan is linked to Asn11. A helical membrane pass occupies residues 38 to 58 (YVGLFLSLLAILLILLFTMLL).

It localises to the membrane. The chain is Serine-rich and transmembrane domain-containing 2 from Mus musculus (Mouse).